Consider the following 595-residue polypeptide: Aspartate--tRNA(Asp/Asn) ligase (595 aa).

Glu-175 is an L-aspartate binding site. Positions 199–202 are aspartate; that stretch reads QQYK. L-aspartate-binding residues include Arg-221 and His-454. An ATP-binding site is contributed by 221–223; the sequence is RDE. Glu-488 provides a ligand contact to ATP. Residue Arg-495 coordinates L-aspartate. 540-543 contacts ATP; it reads GIDR.

The protein belongs to the class-II aminoacyl-tRNA synthetase family. Type 1 subfamily. Homodimer.

It is found in the cytoplasm. It catalyses the reaction tRNA(Asx) + L-aspartate + ATP = L-aspartyl-tRNA(Asx) + AMP + diphosphate. Aspartyl-tRNA synthetase with relaxed tRNA specificity since it is able to aspartylate not only its cognate tRNA(Asp) but also tRNA(Asn). Reaction proceeds in two steps: L-aspartate is first activated by ATP to form Asp-AMP and then transferred to the acceptor end of tRNA(Asp/Asn). This chain is Aspartate--tRNA(Asp/Asn) ligase, found in Sinorhizobium medicae (strain WSM419) (Ensifer medicae).